We begin with the raw amino-acid sequence, 87 residues long: Probable Fe(2+)-trafficking protein (87 aa).

Belongs to the Fe(2+)-trafficking protein family.

Its function is as follows. Could be a mediator in iron transactions between iron acquisition and iron-requiring processes, such as synthesis and/or repair of Fe-S clusters in biosynthetic enzymes. This chain is Probable Fe(2+)-trafficking protein, found in Francisella tularensis subsp. holarctica (strain FTNF002-00 / FTA).